The chain runs to 360 residues: Insulin gene enhancer protein ISL-2 (360 aa).

LIM zinc-binding domains lie at 25-86 (AMCV…RLFG) and 87-149 (IKCA…LLER). A disordered region spans residues 151–177 (AAGSPRSPGPLPGTPPGLHLPDAGSGQ). Ser154 and Ser157 each carry phosphoserine. The segment at residues 192 to 251 (TTRVRTVLNEKQLHTLRTCYAANPRPDALMKEQLVEMTGLSPRVIRVWFQNKRCKDKKKS) is a DNA-binding region (homeobox). The tract at residues 273-302 (GTLLVAGSPSAHENAVQGSAVEVQTYQPPW) is LIM-binding domain (LID). The residue at position 280 (Ser280) is a Phosphoserine. Residues 328–337 (SGSLGNSSGS) show a composition bias toward low complexity. The segment at 328-360 (SGSLGNSSGSDVTSLSSQLPDTPNSMVPSPVET) is disordered. Over residues 338 to 360 (DVTSLSSQLPDTPNSMVPSPVET) the composition is skewed to polar residues.

Interacts with LHX4.

The protein localises to the nucleus. In terms of biological role, transcriptional factor that defines subclasses of motoneurons that segregate into columns in the spinal cord and select distinct axon pathways. The polypeptide is Insulin gene enhancer protein ISL-2 (Isl2) (Rattus norvegicus (Rat)).